The following is a 499-amino-acid chain: Aspartyl/glutamyl-tRNA(Asn/Gln) amidotransferase subunit B (499 aa).

Belongs to the GatB/GatE family. GatB subfamily. As to quaternary structure, heterotrimer of A, B and C subunits.

The catalysed reaction is L-glutamyl-tRNA(Gln) + L-glutamine + ATP + H2O = L-glutaminyl-tRNA(Gln) + L-glutamate + ADP + phosphate + H(+). It catalyses the reaction L-aspartyl-tRNA(Asn) + L-glutamine + ATP + H2O = L-asparaginyl-tRNA(Asn) + L-glutamate + ADP + phosphate + 2 H(+). Its function is as follows. Allows the formation of correctly charged Asn-tRNA(Asn) or Gln-tRNA(Gln) through the transamidation of misacylated Asp-tRNA(Asn) or Glu-tRNA(Gln) in organisms which lack either or both of asparaginyl-tRNA or glutaminyl-tRNA synthetases. The reaction takes place in the presence of glutamine and ATP through an activated phospho-Asp-tRNA(Asn) or phospho-Glu-tRNA(Gln). This chain is Aspartyl/glutamyl-tRNA(Asn/Gln) amidotransferase subunit B, found in Bartonella tribocorum (strain CIP 105476 / IBS 506).